A 235-amino-acid chain; its full sequence is N-alpha-acetyltransferase 10 (235 aa).

At M1 the chain carries N-acetylmethionine. Positions 1 to 58 are interaction with NAA15; sequence MNIRNARPEDLMNMQHCNLLCLPENYQMKYYFYHGLSWPQLSYIAEDENGKIVGYVLA. Positions 1-152 constitute an N-acetyltransferase domain; that stretch reads MNIRNARPED…DAYAMKRDLT (152 aa). At K136 the chain carries N6-acetyllysine; by autocatalysis. Residues 178-235 form a disordered region; it reads NKVESKGNSPPSSGEACREEKGLAAEDSGGDSKDLSEVSETTESTDVKDSSEASDSAS. S182, S186, and S205 each carry phosphoserine. Residues 193-213 show a composition bias toward basic and acidic residues; sequence ACREEKGLAAEDSGGDSKDLS. S209 is subject to Phosphoserine; by IKKB. Phosphoserine occurs at positions 213 and 216.

Belongs to the acetyltransferase family. ARD1 subfamily. Component of the N-terminal acetyltransferase A complex (also called the NatA complex) composed of NAA10 and NAA15. Within the complex interacts with NAA15. Component of the N-terminal acetyltransferase A (NatA)/HYPK complex at least composed of NAA10, NAA15 and HYPK, which has N-terminal acetyltransferase activity. In complex with NAA15, interacts with HYPK. Component of the N-terminal acetyltransferase E (NatE) complex at least composed of NAA10, NAA15 and NAA50. Within the complex interacts with NAA15; the interaction is required for binding to NAAT50. Interacts with NAAT50. The interaction of the NatA complex with NAA50 reduces the acetylation activity of the NatA complex. Component of the N-terminal acetyltransferase E (NatE)/HYPK complex at least composed of NAA10, NAA15, NAA50 and HYPK. In complex with NAA15, interacts with HYPK; the interaction with HYPK reduces the capacity of the NatA complex to interact with NAA50. Interacts with HIF1A (via its ODD domain); the interaction increases HIF1A protein stability during normoxia, an down-regulates it when induced by hypoxia. Interacts with the ribosome. Binds to MYLK. Interacts with NAA16. Interacts (via its C-terminal domain) with TSC2, leading to its acetylation. Interacts with IKBKB. Interacts with HSPA1A and HSPA1B leading to its acetylation. Post-translationally, cleaved by caspases during apoptosis. In terms of processing, phosphorylation by IKBKB/IKKB at Ser-209 promotes its proteasome-mediated degradation. Autoacetylated at Lys-136 which stimulates its catalytic activity. As to expression, ubiquitous.

The protein resides in the cytoplasm. It is found in the nucleus. It catalyses the reaction N-terminal glycyl-[protein] + acetyl-CoA = N-terminal N(alpha)-acetylglycyl-[protein] + CoA + H(+). The enzyme catalyses N-terminal L-alanyl-[protein] + acetyl-CoA = N-terminal N(alpha)-acetyl-L-alanyl-[protein] + CoA + H(+). It carries out the reaction N-terminal L-seryl-[protein] + acetyl-CoA = N-terminal N(alpha)-acetyl-L-seryl-[protein] + CoA + H(+). The catalysed reaction is N-terminal L-valyl-[protein] + acetyl-CoA = N-terminal N(alpha)-acetyl-L-valyl-[protein] + CoA + H(+). It catalyses the reaction N-terminal L-cysteinyl-[protein] + acetyl-CoA = N-terminal N(alpha)-acetyl-L-cysteinyl-[protein] + CoA + H(+). The enzyme catalyses N-terminal L-threonyl-[protein] + acetyl-CoA = N-terminal N(alpha)-acetyl-L-threonyl-[protein] + CoA + H(+). Catalytic subunit of N-terminal acetyltransferase complexes which display alpha (N-terminal) acetyltransferase activity. Acetylates amino termini that are devoid of initiator methionine. The alpha (N-terminal) acetyltransferase activity may be important for vascular, hematopoietic and neuronal growth and development. Without NAA15, displays epsilon (internal) acetyltransferase activity towards HIF1A, thereby promoting its degradation. Represses MYLK kinase activity by acetylation, and thus represses tumor cell migration. Acetylates, and stabilizes TSC2, thereby repressing mTOR activity and suppressing cancer development. Acetylates HSPA1A and HSPA1B at 'Lys-77' which enhances its chaperone activity and leads to preferential binding to co-chaperone HOPX. Acetylates HIST1H4A. Acts as a negative regulator of sister chromatid cohesion during mitosis. The chain is N-alpha-acetyltransferase 10 (NAA10) from Homo sapiens (Human).